A 116-amino-acid chain; its full sequence is Non-specific lipid-transfer protein (116 aa).

A signal peptide spans 1–23 (MASMKVVCVALIMCIVIAPMAES). Intrachain disulfides connect C27-C74, C37-C51, C52-C97, and C72-C111.

The protein belongs to the plant LTP family.

Functionally, plant non-specific lipid-transfer proteins transfer phospholipids as well as galactolipids across membranes. May play a role in wax or cutin deposition in the cell walls of expanding epidermal cells and certain secretory tissues. This chain is Non-specific lipid-transfer protein, found in Cicer arietinum (Chickpea).